The primary structure comprises 581 residues: Penicillin-binding protein activator LpoA (581 aa).

Residues 1–26 form the signal peptide; the sequence is MLSILMQGLRLKKCFLPILVMFFLAG. Cys-27 is lipidated: N-palmitoyl cysteine. Cys-27 is lipidated: S-diacylglycerol cysteine.

It belongs to the LpoA family. Interacts with PBP1a.

It is found in the cell outer membrane. Functionally, regulator of peptidoglycan synthesis that is essential for the function of penicillin-binding protein 1A (PBP1a). This chain is Penicillin-binding protein activator LpoA, found in Histophilus somni (strain 129Pt) (Haemophilus somnus).